The chain runs to 460 residues: tRNA modification GTPase MnmE (460 aa).

(6S)-5-formyl-5,6,7,8-tetrahydrofolate-binding residues include R24, E81, and K121. Positions 218-384 constitute a TrmE-type G domain; that stretch reads GLVVAIAGPP…MVEALAGFAA (167 aa). Residues 228-233, 247-253, and 272-275 contribute to the GTP site; these read NVGKST, SPHAGTT, and DTAG. Positions 232 and 253 each coordinate Mg(2+). (6S)-5-formyl-5,6,7,8-tetrahydrofolate is bound at residue K460.

Belongs to the TRAFAC class TrmE-Era-EngA-EngB-Septin-like GTPase superfamily. TrmE GTPase family. In terms of assembly, homodimer. Heterotetramer of two MnmE and two MnmG subunits. Requires K(+) as cofactor.

Its subcellular location is the cytoplasm. Exhibits a very high intrinsic GTPase hydrolysis rate. Involved in the addition of a carboxymethylaminomethyl (cmnm) group at the wobble position (U34) of certain tRNAs, forming tRNA-cmnm(5)s(2)U34. The polypeptide is tRNA modification GTPase MnmE (Rhodopseudomonas palustris (strain HaA2)).